We begin with the raw amino-acid sequence, 373 residues long: 3 beta-hydroxysteroid dehydrogenase/Delta 5--&gt;4-isomerase type 2 (373 aa).

Residue Tyr-155 is the Proton acceptor of the active site. Lys-159 provides a ligand contact to NAD(+). A helical transmembrane segment spans residues Val-288–Ile-308.

It belongs to the 3-beta-HSD family. In terms of tissue distribution, liver and kidney.

The protein resides in the endoplasmic reticulum membrane. The protein localises to the mitochondrion membrane. The enzyme catalyses a 3beta-hydroxy-Delta(5)-steroid + NAD(+) = a 3-oxo-Delta(5)-steroid + NADH + H(+). It carries out the reaction a 3-oxo-Delta(5)-steroid = a 3-oxo-Delta(4)-steroid. The catalysed reaction is pregnenolone + NAD(+) = pregn-5-ene-3,20-dione + NADH + H(+). It catalyses the reaction pregn-5-ene-3,20-dione = progesterone. The enzyme catalyses 3beta-hydroxyandrost-5-en-17-one + NAD(+) = androst-5-ene-3,17-dione + NADH + H(+). It carries out the reaction androst-5-ene-3,17-dione = androst-4-ene-3,17-dione. It functions in the pathway lipid metabolism; steroid biosynthesis. 3-beta-HSD is a bifunctional enzyme, that catalyzes the oxidative conversion of Delta(5)-ene-3-beta-hydroxy steroid, and the oxidative conversion of ketosteroids. The 3-beta-HSD enzymatic system plays a crucial role in the biosynthesis of all classes of hormonal steroids. The chain is 3 beta-hydroxysteroid dehydrogenase/Delta 5--&gt;4-isomerase type 2 from Mus musculus (Mouse).